Consider the following 500-residue polypeptide: Prostacyclin synthase (500 aa).

Residues 1 to 20 traverse the membrane as a helical segment; that stretch reads MAWAALLGLLAALLLLLLLS. Substrate contacts are provided by residues Arg106, Leu112, Asn287, 358 to 359, and Arg382; that span reads TR. Residue Cys441 participates in heme binding.

This sequence belongs to the cytochrome P450 family. The cofactor is heme. In terms of tissue distribution, widely expressed; particularly abundant in ovary, heart, skeletal muscle, lung and prostate.

Its subcellular location is the endoplasmic reticulum membrane. It catalyses the reaction prostaglandin H2 = prostaglandin I2. The catalysed reaction is a hydroperoxyeicosatetraenoate = an oxoeicosatetraenoate + H2O. It carries out the reaction (15S)-hydroperoxy-(5Z,8Z,11Z,13E)-eicosatetraenoate = 15-oxo-(5Z,8Z,11Z,13E)-eicosatetraenoate + H2O. The enzyme catalyses (15S)-hydroperoxy-(5Z,8Z,11Z,13E)-eicosatetraenoate + AH2 = (15S)-hydroxy-(5Z,8Z,11Z,13E)-eicosatetraenoate + A + H2O. Its function is as follows. Catalyzes the biosynthesis and metabolism of eicosanoids. Catalyzes the isomerization of prostaglandin H2 to prostacyclin (= prostaglandin I2), a potent mediator of vasodilation and inhibitor of platelet aggregation. Additionally, displays dehydratase activity, toward hydroperoxyeicosatetraenoates (HPETEs), especially toward (15S)-hydroperoxy-(5Z,8Z,11Z,13E)-eicosatetraenoate (15(S)-HPETE). The chain is Prostacyclin synthase (PTGIS) from Homo sapiens (Human).